A 282-amino-acid chain; its full sequence is Nucleotide-binding protein PXO_02223 (282 aa).

Position 5 to 12 (5 to 12) interacts with ATP; the sequence is GLSGSGKS. 57-60 is a GTP binding site; sequence DVRS.

Belongs to the RapZ-like family.

Its function is as follows. Displays ATPase and GTPase activities. The protein is Nucleotide-binding protein PXO_02223 of Xanthomonas oryzae pv. oryzae (strain PXO99A).